A 346-amino-acid polypeptide reads, in one-letter code: UDP-N-acetylenolpyruvoylglucosamine reductase (346 aa).

The 172-residue stretch at 18 to 189 (LRAQARAFIA…VSVVFALKTH (172 aa)) folds into the FAD-binding PCMH-type domain. Arg-165 is an active-site residue. The active-site Proton donor is the Ser-240. The active site involves Glu-336.

It belongs to the MurB family. FAD is required as a cofactor.

It is found in the cytoplasm. The enzyme catalyses UDP-N-acetyl-alpha-D-muramate + NADP(+) = UDP-N-acetyl-3-O-(1-carboxyvinyl)-alpha-D-glucosamine + NADPH + H(+). Its pathway is cell wall biogenesis; peptidoglycan biosynthesis. Its function is as follows. Cell wall formation. The protein is UDP-N-acetylenolpyruvoylglucosamine reductase of Neisseria meningitidis serogroup C (strain 053442).